Here is a 322-residue protein sequence, read N- to C-terminus: uncharacterized protein (322 aa).

The Radical SAM core domain maps to K34–E286. Positions 50, 58, and 61 each coordinate [4Fe-4S] cluster.

Belongs to the radical SAM superfamily. It depends on [4Fe-4S] cluster as a cofactor.

This is an uncharacterized protein from Methanocaldococcus jannaschii (strain ATCC 43067 / DSM 2661 / JAL-1 / JCM 10045 / NBRC 100440) (Methanococcus jannaschii).